Here is a 36-residue protein sequence, read N- to C-terminus: Photosystem II reaction center protein M (36 aa).

The chain crosses the membrane as a helical span at residues 5 to 25; the sequence is ILGVIAVALFILIPTSFLLIL.

The protein belongs to the PsbM family. As to quaternary structure, PSII is composed of 1 copy each of membrane proteins PsbA, PsbB, PsbC, PsbD, PsbE, PsbF, PsbH, PsbI, PsbJ, PsbK, PsbL, PsbM, PsbT, PsbY, PsbZ, Psb30/Ycf12, at least 3 peripheral proteins of the oxygen-evolving complex and a large number of cofactors. It forms dimeric complexes.

It localises to the plastid. It is found in the chloroplast thylakoid membrane. Its function is as follows. One of the components of the core complex of photosystem II (PSII). PSII is a light-driven water:plastoquinone oxidoreductase that uses light energy to abstract electrons from H(2)O, generating O(2) and a proton gradient subsequently used for ATP formation. It consists of a core antenna complex that captures photons, and an electron transfer chain that converts photonic excitation into a charge separation. This subunit is found at the monomer-monomer interface. The sequence is that of Photosystem II reaction center protein M from Bigelowiella natans (Pedinomonas minutissima).